The following is a 316-amino-acid chain: Adenine deaminase (316 aa).

Zn(2+)-binding residues include histidine 14, histidine 16, and histidine 194. Glutamate 197 functions as the Proton donor in the catalytic mechanism. Aspartate 275 contacts Zn(2+). Aspartate 276 is a binding site for substrate.

This sequence belongs to the metallo-dependent hydrolases superfamily. Adenosine and AMP deaminases family. Adenine deaminase type 2 subfamily. Zn(2+) is required as a cofactor.

The enzyme catalyses adenine + H2O + H(+) = hypoxanthine + NH4(+). Its function is as follows. Catalyzes the hydrolytic deamination of adenine to hypoxanthine. Plays an important role in the purine salvage pathway and in nitrogen catabolism. The polypeptide is Adenine deaminase (Pseudomonas aeruginosa (strain UCBPP-PA14)).